The chain runs to 117 residues: Protein Wnt-6 (117 aa).

The O-palmitoleoyl serine; by PORCN moiety is linked to residue serine 1. Cysteines 83 and 98 form a disulfide. Residue asparagine 84 is glycosylated (N-linked (GlcNAc...) asparagine).

The protein belongs to the Wnt family. In terms of processing, palmitoleoylation is required for efficient binding to frizzled receptors. Depalmitoleoylation leads to Wnt signaling pathway inhibition.

Its subcellular location is the secreted. The protein localises to the extracellular space. It localises to the extracellular matrix. Its function is as follows. Ligand for members of the frizzled family of seven transmembrane receptors. Probable developmental protein. May be a signaling molecule which affects the development of discrete regions of tissues. Is likely to signal over only few cell diameters. The sequence is that of Protein Wnt-6 (WNT-6) from Strongylocentrotus purpuratus (Purple sea urchin).